Consider the following 490-residue polypeptide: Glucose-6-phosphate 1-dehydrogenase (490 aa).

Residues Arg48, 90–91, and Lys145 each bind NADP(+); that span reads DI. Residues His175, Lys179, Glu213, and Asp232 each contribute to the substrate site. Residue His237 is the Proton acceptor of the active site. 2 residues coordinate substrate: Lys340 and Lys345.

Belongs to the glucose-6-phosphate dehydrogenase family.

The enzyme catalyses D-glucose 6-phosphate + NADP(+) = 6-phospho-D-glucono-1,5-lactone + NADPH + H(+). Its pathway is carbohydrate degradation; pentose phosphate pathway; D-ribulose 5-phosphate from D-glucose 6-phosphate (oxidative stage): step 1/3. Its function is as follows. Catalyzes the oxidation of glucose 6-phosphate to 6-phosphogluconolactone. The polypeptide is Glucose-6-phosphate 1-dehydrogenase (Buchnera aphidicola subsp. Baizongia pistaciae (strain Bp)).